A 272-amino-acid polypeptide reads, in one-letter code: Phosphate import ATP-binding protein PstB (272 aa).

Residues Leu-26–Ile-267 enclose the ABC transporter domain. Residue Gly-58 to Ser-65 participates in ATP binding.

The protein belongs to the ABC transporter superfamily. Phosphate importer (TC 3.A.1.7) family. The complex is composed of two ATP-binding proteins (PstB), two transmembrane proteins (PstC and PstA) and a solute-binding protein (PstS).

The protein localises to the cell inner membrane. The catalysed reaction is phosphate(out) + ATP + H2O = ADP + 2 phosphate(in) + H(+). In terms of biological role, part of the ABC transporter complex PstSACB involved in phosphate import. Responsible for energy coupling to the transport system. This chain is Phosphate import ATP-binding protein PstB, found in Shewanella denitrificans (strain OS217 / ATCC BAA-1090 / DSM 15013).